We begin with the raw amino-acid sequence, 703 residues long: Pentatricopeptide repeat-containing protein At1g22830 (703 aa).

PPR repeat units lie at residues 82–116 (VLYS…GLEF), 117–147 (DSVL…SEIL), 148–182 (HPLP…GIRA), 183–217 (DEFT…SHRC), 218–248 (NLYV…MSER), 249–283 (DAVS…GVEA), 284–318 (SIVT…NVRI), 319–353 (GSVA…CSFS), 356–386 (IDNV…VEAN), 387–421 (SLST…GFHP), 422–452 (NHIT…ILRR), 458–488 (CLIL…MRKR), 489–523 (DKVT…GIKP), 524–554 (DHVT…MEHV), and 560–594 (RLEH…PSSA). The segment at 595–671 (MCATLLKACL…AHEFALMETD (77 aa)) is type E motif. Positions 671 to 703 (DSELDGENNKPMNDDSVINQEQSSDEERLVEVG) are disordered.

The protein belongs to the PPR family. PCMP-E subfamily.

The chain is Pentatricopeptide repeat-containing protein At1g22830 (PCMP-E24) from Arabidopsis thaliana (Mouse-ear cress).